The following is a 237-amino-acid chain: Phosphoribosylaminoimidazole-succinocarboxamide synthase (237 aa).

The protein belongs to the SAICAR synthetase family.

It carries out the reaction 5-amino-1-(5-phospho-D-ribosyl)imidazole-4-carboxylate + L-aspartate + ATP = (2S)-2-[5-amino-1-(5-phospho-beta-D-ribosyl)imidazole-4-carboxamido]succinate + ADP + phosphate + 2 H(+). It participates in purine metabolism; IMP biosynthesis via de novo pathway; 5-amino-1-(5-phospho-D-ribosyl)imidazole-4-carboxamide from 5-amino-1-(5-phospho-D-ribosyl)imidazole-4-carboxylate: step 1/2. In Alteromonas mediterranea (strain DSM 17117 / CIP 110805 / LMG 28347 / Deep ecotype), this protein is Phosphoribosylaminoimidazole-succinocarboxamide synthase.